Reading from the N-terminus, the 314-residue chain is Methionyl-tRNA formyltransferase (314 aa).

110–113 (SLLP) serves as a coordination point for (6S)-5,6,7,8-tetrahydrofolate.

The protein belongs to the Fmt family.

It catalyses the reaction L-methionyl-tRNA(fMet) + (6R)-10-formyltetrahydrofolate = N-formyl-L-methionyl-tRNA(fMet) + (6S)-5,6,7,8-tetrahydrofolate + H(+). Its function is as follows. Attaches a formyl group to the free amino group of methionyl-tRNA(fMet). The formyl group appears to play a dual role in the initiator identity of N-formylmethionyl-tRNA by promoting its recognition by IF2 and preventing the misappropriation of this tRNA by the elongation apparatus. The protein is Methionyl-tRNA formyltransferase of Bacillus cereus (strain B4264).